Reading from the N-terminus, the 13477-residue chain is Mucin-3B (13477 aa).

The N-terminal stretch at 1–21 (MQLLGLLSILWMLKSSPGATG) is a signal peptide. A compositionally biased stretch (low complexity) spans 219-234 (TISSTTRTTERTPLPT). Disordered stretches follow at residues 219-243 (TISS…TMSP), 327-347 (TRST…TVTD), 360-383 (GTLS…TPMT), 513-559 (SMTT…PSTL), 622-643 (ATTP…STPS), 815-839 (TTTN…TGTG), 923-968 (TSQT…STTE), 1154-1179 (PSMS…TSTL), 1480-1511 (SPTV…STEN), 1529-1601 (SISA…FPET), 1619-1638 (MTST…VTSM), 1692-1714 (TTST…TDSM), 1944-1968 (TTSA…TFTS), 2064-2123 (TPNA…IAKS), 2170-2197 (STSM…SGGI), 2275-2308 (SSSM…AEST), 2442-2462 (RSTP…VKGS), 2476-2497 (LSME…TATT), 2509-2537 (SHST…GPPT), 2591-2610 (SAMS…TETS), 2672-2717 (TSTL…FSSS), 2812-2832 (TTIT…STST), 2845-2867 (TMTE…STTE), 2922-2947 (SRIP…SVGI), 3074-3109 (ETPS…TPDI), 3309-3395 (TTSH…NSNS), 3420-3481 (ITTT…SHST), 3545-3565 (STTS…STPS), 3654-3727 (SITT…STTA), 3740-3812 (ITTI…TTAE), 4014-4047 (TETT…SIAT), 4067-4106 (TSNS…HSTP), 4182-4249 (TTET…SSIT), 4269-4313 (NSTS…PSFT), 4510-4530 (SHST…SHST), 4557-4617 (TETT…STSS), 4630-4651 (YSPS…STPS), 4802-4830 (TSSF…TATG), 4953-4986 (HSLP…KTIS), 5128-5203 (YTSS…ITTT), 5455-5486 (ITNT…PSFT), 5627-5680 (TTKT…ATSK), 5834-5908 (TTSY…HSPP), 5957-5977 (STPS…SSPS), 5990-6017 (HSTA…SSIT), 6030-6080 (TSSI…PPIF), 6120-6150 (TTET…SFTS), 6172-6197 (TEST…HTPP), 6456-6481 (TETP…HSTP), 6541-6598 (TKTT…TSTS), 6846-6867 (TTGT…TKTT), 6946-6971 (ITTT…RTSH), 6999-7021 (TTES…ETRS), 7067-7093 (TTET…HSPP), 7170-7206 (TETA…TTGI), 7225-7244 (SHST…ISHS), 7299-7329 (FTSS…TSHS), 7400-7433 (SYTS…HRTP), 7476-7532 (TETI…TTST), 7578-7600 (TGTS…TTSH), 7731-7766 (TEIT…ATSK), 7922-7996 (SHST…PPIF), 8036-8066 (TTET…SFTS), 8088-8113 (TEST…HTPP), 8372-8397 (TETP…HSTP), 8457-8514 (TKTT…TSTS), 8762-8783 (TTGT…TKTT), 8862-8887 (ITTT…RTSH), 8915-8941 (TTES…HSPP), 8983-9009 (TTET…HSPP), 9052-9122 (AETT…TTGI), 9141-9160 (SHST…ISHS), 9215-9240 (FTSS…TSTE), 9335-9366 (TSSI…HRTP), 9409-9465 (TETI…TTST), 9566-9589 (SHST…NPSL), 9612-9674 (TTET…PPSF), 9734-9760 (TTSH…SSFT), 9828-9859 (TSSI…HSTP), 9883-9908 (TTTE…RSHS), 9921-9973 (TTSH…SKTI), 10076-10099 (SDST…SPSF), 10120-10166 (ITTT…TVPS), 10189-10285 (ITTE…SPLS), 10389-10425 (TSSI…LSSA), 10462-10481 (TTKT…TSTK), 10501-10537 (SHSS…TSTS), 10640-10660 (TTSF…TPSF), 10750-10828 (TTTE…QRSP), 10887-11032 (TTET…SPSS), 11044-11065 (SHST…HSTP), 11276-11317 (TGTE…SPSH), 11446-11482 (STTA…ITTT), 11566-11697 (TTET…PGFS), 11754-11779 (TKTT…HSTP), 11818-11949 (SIAT…HSPP), 12067-12103 (TSSF…STPV), 12186-12220 (PSYT…HSTP), 12280-12323 (TETT…STPI), 12364-12452 (TTET…TTET), 12468-12578 (EMTS…NTPS), 12616-12639 (FTTA…DIPT), 12681-12700 (SSPS…TSPT), 12785-12805 (IPST…LQTS), 12985-13011 (TSSM…TVPT), and 13052-13086 (SLPT…TPTT). Low complexity-rich tracts occupy residues 513 to 538 (SMTT…LSST) and 547 to 559 (TSHT…PSTL). Residues 1620-1638 (TSTPPITSSVTPTNTVTSM) are compositionally biased toward low complexity. Polar residues predominate over residues 1944-1956 (TTSATMEPPSSSV). A compositionally biased stretch (low complexity) spans 1957-1968 (AATDTGQTTFTS). Residues 2066–2091 (NASSMTTSETTYPNSPTGPVTNSMSK) are compositionally biased toward polar residues. Low complexity predominate over residues 2096-2107 (ASMTQTSSTATS). Positions 2113–2123 (PSGSTTEIAKS) are enriched in polar residues. Residues 2170 to 2185 (STSMTPSTVSTSIPTS) show a composition bias toward low complexity. Residues 2186 to 2195 (QPKTVNSSSG) show a composition bias toward polar residues. Low complexity-rich tracts occupy residues 2292-2308 (SSPP…AEST) and 2442-2458 (RSTP…PTST). Residues 2591-2603 (SAMSTSDIPSSPS) are compositionally biased toward low complexity. Low complexity-rich tracts occupy residues 2929-2944 (STDI…TPSS) and 3074-3097 (ETPS…TATS). Residues 3098 to 3109 (PETNTLTPTPDI) show a composition bias toward polar residues. Over residues 3309 to 3359 (TTSHSTPSFTSPIATTKTSSHSSPSFTSSIATLETTSHSTPSFTSSITTNS) the composition is skewed to low complexity. The span at 3360-3370 (HSTPRFSSSIA) shows a compositional bias: polar residues. Over residues 3371-3385 (TRETTSHSTSSFTPS) the composition is skewed to low complexity. The segment covering 3386 to 3395 (IATTKTNSNS) has biased composition (polar residues). Low complexity predominate over residues 3420–3452 (ITTTETTSHSTPSFTSSMATTKTTSHSTPSFTS). Residues 3453 to 3462 (PIATRETTSH) are compositionally biased toward polar residues. Over residues 3463–3481 (STPSFTSLITTTKTTSHST) the composition is skewed to low complexity. Residues 3740-3749 (ITTIETPSHG) are compositionally biased toward polar residues. Over residues 3750 to 3785 (TPSFTSSITSTETTSHSSPSFISSITTTEITSHSTP) the composition is skewed to low complexity. Residues 3786–3812 (RFTSSITTMETPSHSTPNFTSSITTAE) show a composition bias toward polar residues. 2 stretches are compositionally biased toward low complexity: residues 4020-4042 (STPS…PSFT) and 4067-4096 (TSNS…SSMT). Over residues 4097-4106 (ATETTSHSTP) the composition is skewed to polar residues. Low complexity-rich tracts occupy residues 4182-4228 (TTET…PSFT) and 4237-4249 (TSHS…SSIT). Residues 4557 to 4574 (TETTSNSSPSFTSSITNT) are compositionally biased toward low complexity. A compositionally biased stretch (polar residues) spans 4575–4601 (KTTSYSPPGFTSSIPATETTSRSPPGF). Residues 4602 to 4617 (TSSITTTETTSHSTSS) are compositionally biased toward low complexity. The span at 4802–4827 (TSSFTSSITSTETTSHSTPSLTSSIT) shows a compositional bias: low complexity. Low complexity predominate over residues 5137–5158 (TPSHITPSFTSTITTSESTSHS). Residues 5159 to 5170 (NPSLTSAITTTE) are compositionally biased toward polar residues. 2 stretches are compositionally biased toward low complexity: residues 5174–5203 (HSPP…ITTT) and 5458–5486 (TEST…PSFT). A compositionally biased stretch (low complexity) spans 5834 to 5858 (TTSYSTPSITSSITTTERTSHSTPS). The span at 5859–5874 (YTSSIATRETPSHTVP) shows a compositional bias: polar residues. Residues 5875–5889 (SFTSSITTTESTSHS) show a composition bias toward low complexity. The span at 5890 to 5901 (NPSLTSAITTTE) shows a compositional bias: polar residues. The span at 6045–6059 (SFTSSITTTDSTSHS) shows a compositional bias: low complexity. The segment covering 6060-6071 (NPSLTSAITTTE) has biased composition (polar residues). Residues 6172–6185 (TESTSHSTPSFTSS) show a composition bias toward low complexity. Residues 6186–6197 (IATTETTSHTPP) show a composition bias toward polar residues. Residues 6456 to 6475 (TETPSHSTPSFPSSITTTQS) show a composition bias toward low complexity. A compositionally biased stretch (polar residues) spans 6852–6867 (HNTLGLSSSVDTTKTT). A compositionally biased stretch (low complexity) spans 6946-6965 (ITTTETTSHSTPSITSSVTT). Positions 6999–7018 (TTESTSHSNPSLTSAITTTE) are enriched in polar residues. The segment covering 7172–7206 (TASHSNPSSTSSITTTESTSHSPPRSTSAIATTGI) has biased composition (low complexity). Composition is skewed to low complexity over residues 7300 to 7329 (TSSI…TSHS) and 7400 to 7427 (SYTS…STET). Over residues 7476–7491 (TETISHSPPSFTSLTN) the composition is skewed to polar residues. Low complexity predominate over residues 7492–7532 (STETTSHSPPSFTSSSTTTETPSHSTPGFSSSIATSKTTST). Low complexity-rich tracts occupy residues 7734 to 7766 (TSHS…ATSK) and 7922 to 7944 (SHST…STPS). A compositionally biased stretch (polar residues) spans 7945–7987 (YTSSIATSETPSHTVPSFTSLITTTDSTSHSNPSLTSAITTTE). Residues 8088–8101 (TESTSHSTPSFTSS) are compositionally biased toward low complexity. The span at 8102-8113 (IATTETTSHTPP) shows a compositional bias: polar residues. The segment covering 8372–8391 (TETPSHSTPSFPSSITTTQS) has biased composition (low complexity). Residues 8768-8783 (HNTLGLSSSVDTTKTT) are compositionally biased toward polar residues. Residues 8862–8881 (ITTTETTSHSTPSITSSVTT) show a composition bias toward low complexity. A compositionally biased stretch (polar residues) spans 8915 to 8934 (TTESTSHSNPSLTSAITTTE). Low complexity-rich tracts occupy residues 9067 to 9081 (PTTE…SFTS) and 9088 to 9122 (TASH…TTGI). Over residues 9335 to 9360 (TSSITTTETPSHSSPSFPSSITSTET) the composition is skewed to low complexity. Positions 9409-9424 (TETISHSPPSFTSLTN) are enriched in polar residues. Composition is skewed to low complexity over residues 9425-9465 (STET…TTST), 9566-9585 (SHST…TSHS), and 9612-9624 (TTET…PSFT). Residues 9625–9661 (SSIATAETTSHSPPSFTSLITTSETPSHSNPSFTSLI) are compositionally biased toward polar residues. Positions 9662 to 9674 (TTTESTSHSPPSF) are enriched in low complexity. Polar residues-rich tracts occupy residues 9892-9903 (NPSLTSAITNTE) and 9921-9933 (TTSH…TSLI). Positions 9934 to 9973 (TSTETTSHSPPSFTSSSTTTETPSHSTPGFSSSIATSKTI) are enriched in low complexity. A compositionally biased stretch (low complexity) spans 10120 to 10130 (ITTTETTSHST). The span at 10131 to 10166 (PNITSSVTTTERTSHSTPSYTSSIATGETPSHTVPS) shows a compositional bias: polar residues. Composition is skewed to low complexity over residues 10196–10271 (HSPP…SFTS) and 10394–10421 (TSET…STPS). The span at 10750–10791 (TTTETTSHSPPRFTSSITTTKTPSDSTPVFTPSIATSETSSH) shows a compositional bias: polar residues. Composition is skewed to low complexity over residues 10792-10828 (STPG…QRSP), 10887-10937 (TTET…SSIT), and 10950-11032 (PSSI…SPSS). Residues 11278–11291 (TETTSHSPPHFTSS) are compositionally biased toward low complexity. Over residues 11292–11317 (ITRTKTTSHRPPTFTSSITTTESPSH) the composition is skewed to polar residues. Residues 11566–11682 (TTETTSHSIP…SHSTSGFTSS (117 aa)) show a composition bias toward low complexity. 2 stretches are compositionally biased toward polar residues: residues 11683 to 11697 (NATT…PGFS) and 11754 to 11769 (TKTT…SSIA). Composition is skewed to low complexity over residues 11770–11779 (STKTTSHSTP) and 11818–11880 (SIAT…SHST). Composition is skewed to polar residues over residues 11881 to 11896 (PSFT…TSHS) and 11903 to 11912 (LIPTTKTTLH). Low complexity-rich tracts occupy residues 11913–11949 (SPPS…HSPP) and 12067–12091 (TSSF…TSSI). The span at 12092–12103 (AVTETPSDSTPV) shows a compositional bias: polar residues. Over residues 12280 to 12309 (TETTSHSAPNFSSSITSTETTSHSTPSFTS) the composition is skewed to low complexity. The span at 12310–12323 (AITSTETTSHSTPI) shows a compositional bias: polar residues. The segment covering 12364-12412 (TTETTSHSTPGFASSITTTKTTSHSTPSFTSSIATSNTTSSSTPGFTSS) has biased composition (low complexity). A compositionally biased stretch (polar residues) spans 12413 to 12439 (IATTETTSRSTPGFTSSIVTTETTSPH). The segment covering 12440-12452 (TPGFTSSITTTET) has biased composition (low complexity). Polar residues predominate over residues 12468–12477 (EMTSHSTPSL). Low complexity-rich tracts occupy residues 12478–12569 (TFSI…VTTP), 12624–12639 (TSTP…DIPT), 12681–12692 (SSPSIQSTETSS), 12794–12805 (QTTPSIPSLQTS), 12990–13003 (PESE…ASSS), and 13073–13086 (TSET…TPTT). The EGF-like domain maps to 13130-13163 (SGDRCQLQTRCQNGGQWDGLKCQCPSTFYGSSCE). Cystine bridges form between C13134-C13140 and C13153-C13162. The 126-residue stretch at 13172–13297 (DVVETEVGME…DSIKVNNNSK (126 aa)) folds into the SEA domain. A helical membrane pass occupies residues 13381–13401 (LVGGLTAGAALLVLLLLALGV).

In terms of processing, highly O-glycosylated and probably also N-glycosylated. As to expression, fetal and adult small intestine and fetal and adult colon.

It is found in the membrane. Its function is as follows. Major glycoprotein component of a variety of mucus gels. Thought to provide a protective, lubricating barrier against particles and infectious agents at mucosal surfaces. The protein is Mucin-3B of Homo sapiens (Human).